A 489-amino-acid chain; its full sequence is Valine--tRNA ligase (489 aa).

The 'KMSKS' region signature appears at 482 to 486 (KMSKS). Lys485 is an ATP binding site.

It belongs to the class-I aminoacyl-tRNA synthetase family.

It catalyses the reaction tRNA(Val) + L-valine + ATP = L-valyl-tRNA(Val) + AMP + diphosphate. In Trichomonas vaginalis, this protein is Valine--tRNA ligase (VALS).